Here is a 226-residue protein sequence, read N- to C-terminus: Ribose-5-phosphate isomerase A (226 aa).

Substrate is bound by residues 33-36 (TGST), 86-89 (DGAD), and 99-102 (KGGG). The active-site Proton acceptor is glutamate 108. Position 126 (lysine 126) interacts with substrate.

This sequence belongs to the ribose 5-phosphate isomerase family. As to quaternary structure, homodimer.

The catalysed reaction is aldehydo-D-ribose 5-phosphate = D-ribulose 5-phosphate. Its pathway is carbohydrate degradation; pentose phosphate pathway; D-ribose 5-phosphate from D-ribulose 5-phosphate (non-oxidative stage): step 1/1. Its function is as follows. Catalyzes the reversible conversion of ribose-5-phosphate to ribulose 5-phosphate. The polypeptide is Ribose-5-phosphate isomerase A (Bordetella pertussis (strain Tohama I / ATCC BAA-589 / NCTC 13251)).